The following is a 591-amino-acid chain: Oxaloacetate decarboxylase alpha chain (591 aa).

The 261-residue stretch at 3-263 (IAITDVVLRD…DTGLDILKLE (261 aa)) folds into the Pyruvate carboxyltransferase domain. Residues 518 to 591 (PAGAGTPVTA…SVGDTLMTLA (74 aa)) form the Biotinyl-binding domain. The residue at position 557 (lysine 557) is an N6-biotinyllysine.

Composed of three chains (alpha, beta, and gamma). It depends on biotin as a cofactor.

The enzyme catalyses oxaloacetate + 2 Na(+)(in) + H(+) = pyruvate + 2 Na(+)(out) + CO2. Its function is as follows. Catalyzes the decarboxylation of oxaloacetate coupled to Na(+) translocation. This is Oxaloacetate decarboxylase alpha chain (oadA1) from Salmonella typhi.